The following is a 167-amino-acid chain: MAFSISSTMIFLLSLALFSTLVSADNHLLPGERLNPGNFLKQDRYMLIMQEDCNLVLYNLNKPEWATKTANQGSRCFVTLQSDGNFVIYDEHEQEGRNEAIWASKTDGENGNYVIILQKDGNLVLYSKPIFATGTNRFGSTAVVVAKRNRKAHFGVEQNIIEVTTNL.

A signal peptide spans 1-24 (MAFSISSTMIFLLSLALFSTLVSA). Residues 25 to 138 (DNHLLPGERL…PIFATGTNRF (114 aa)) enclose the Bulb-type lectin domain. Cys53 and Cys76 form a disulfide bridge.

In terms of assembly, homotetramer. As to expression, expressed in the pseudobulb, with highest levels of expression in the non-swollen internode (at protein level).

The protein localises to the secreted. In terms of biological role, mannose-specific lectin. Shows agglutinating activity towards chicken erythrocytes. Has antifungal activity against A.alternata and Collectotrichum species. The chain is Mannose-specific lectin from Dendrobium findlayanum (Findlay's orchid).